The following is a 250-amino-acid chain: MTIKEVKELLSTDVTEDQLAELEKDPRVGVQKLIISYRKKQAKLLAKKQAFLERFSYEKQFWQKGELVAGVDEVGRGPLAGPVVTAAVIIDHNFDLLEVNDSKKLSPEKRLQLYPKILSEAVSVGIGVKSAAVIDQINIYEADRQAMAQAVKALDVKPNALLVDAMNVPVDLPQIELIKGDAKSNSIAAASIVAKVFRDKLMDDYDKIYPQYGFPRNAGYGTKEHIDALKKYGPTPIHRKTFAPVSDFFK.

The RNase H type-2 domain occupies 66-250 (ELVAGVDEVG…TFAPVSDFFK (185 aa)). D72, E73, and D164 together coordinate a divalent metal cation.

This sequence belongs to the RNase HII family. The cofactor is Mn(2+). Requires Mg(2+) as cofactor.

It is found in the cytoplasm. It carries out the reaction Endonucleolytic cleavage to 5'-phosphomonoester.. Functionally, endonuclease that specifically degrades the RNA of RNA-DNA hybrids. This Lactobacillus helveticus (strain DPC 4571) protein is Ribonuclease HII.